The chain runs to 468 residues: MAFINLVPKLYQSVIEDVIEGVRDLFAEEGIEEQVLKDLKKLWETKVLQSKATEDFFRNSTQVPLLTLQLPHALPPALQPEASLLIPAGRTLPSFTPEDLNTANCGANFAFAGYPIHVPAGMAFQTASGHLYKVNVPVMVTQTSGRTEILQHPFQQVLQQLGQPLVIQTTVPTLHPCSLQAATEKSLRMEAVLQPPPILHPPPVDRTHVENAASDRRLLPGNELRPQESSPYLSLPGVGFPPQAALTESSLEPVLGVSASLTQNLHSDPFSQGPPGPLHHHLLESQLQSLKDSIYGCDSTKQLRKAEEPSSLRVSEKNCTSERDLNIRVTDDDINEIIQIDGTGDNSSTEEMGSIRDADENEFPGIIDAGDLNVLEEVDSVSNEDSTANSSDNEDHQINAPEEDPLNSGDDVSEQDVPDLFDTENVIVCQYDKIHRSKNRWKFYLKDGVMCFGGRDYVFAKAIGEAEW.

2 disordered regions span residues 215–236 and 379–416; these read DRRLLPGNELRPQESSPYLSLP and DSVSNEDSTANSSDNEDHQINAPEEDPLNSGDDVSEQD. Positions 380–391 are enriched in polar residues; that stretch reads SVSNEDSTANSS. Residues 401 to 416 show a composition bias toward acidic residues; the sequence is PEEDPLNSGDDVSEQD.

It belongs to the TFIIA subunit 1 family. In terms of tissue distribution, testis specific. Expressed in pachytene spermatocytes and haploid spermatids.

It is found in the nucleus. In terms of biological role, may function as a testis specific transcription factor. Binds DNA in conjunction with GTF2A2 and TBP (the TATA-binding protein) and together with GTF2A2, allows mRNA transcription. The polypeptide is TFIIA-alpha and beta-like factor (Gtf2a1l) (Mus musculus (Mouse)).